The following is a 345-amino-acid chain: Sorting nexin-15 (345 aa).

A PX domain is found at 1–130 (MSRQAKDDFL…EFFRGGEVTR (130 aa)). Arg-105 bears the Omega-N-methylarginine mark. Residues 133–163 (EVSGDLHILPPPLIPTPPPDEPRVQPHETWL) are disordered. A compositionally biased stretch (pro residues) spans 141 to 151 (LPPPLIPTPPP). Phosphoserine is present on residues Ser-208 and Ser-234. Residues 226 to 274 (SKEEGAGPSPTHIGELAALEAGSGRPDQEPWEPGGQAEEDDEEGEPAPA) are disordered. The MIT domain maps to 272–345 (APAYLSQATE…AEEILHLHLS (74 aa)).

Belongs to the sorting nexin family.

Its function is as follows. May be involved in several stages of intracellular trafficking. Overexpression of SNX15 disrupts the normal trafficking of proteins from the plasma membrane to recycling endosomes or the TGN. In Bos taurus (Bovine), this protein is Sorting nexin-15 (SNX15).